Consider the following 425-residue polypeptide: Enolase (425 aa).

Positions 31 to 54 are disordered; sequence TGSAIVPSGASTGEKEAVELRDSD. Residues 43-54 show a composition bias toward basic and acidic residues; it reads GEKEAVELRDSD. Residue glutamine 162 coordinates (2R)-2-phosphoglycerate. The active-site Proton donor is the glutamate 204. Mg(2+) contacts are provided by aspartate 241, glutamate 285, and aspartate 312. (2R)-2-phosphoglycerate contacts are provided by lysine 337, arginine 366, serine 367, and lysine 388. The active-site Proton acceptor is lysine 337.

It belongs to the enolase family. Mg(2+) is required as a cofactor.

It is found in the cytoplasm. The protein localises to the secreted. It localises to the cell surface. The catalysed reaction is (2R)-2-phosphoglycerate = phosphoenolpyruvate + H2O. It participates in carbohydrate degradation; glycolysis; pyruvate from D-glyceraldehyde 3-phosphate: step 4/5. Its function is as follows. Catalyzes the reversible conversion of 2-phosphoglycerate (2-PG) into phosphoenolpyruvate (PEP). It is essential for the degradation of carbohydrates via glycolysis. This chain is Enolase, found in Gloeobacter violaceus (strain ATCC 29082 / PCC 7421).